The sequence spans 181 residues: Protein CRABS CLAW (181 aa).

A C4-type zinc finger spans residues 26–53 (CSICNTILAVGIPLKRMLDTVTVKCGHC). Residues 80–122 (GSDYKKGSSSSSSSSTSSDQPPSPSPPFVVKPPEKKQRLPSAY) are disordered. Low complexity predominate over residues 87–99 (SSSSSSSSTSSDQ). The span at 100–109 (PPSPSPPFVV) shows a compositional bias: pro residues.

Belongs to the YABBY family. Restricted to flowers, mostly in carpels and nectaries. Expressed at low levels in sepal primordia (buds), sepal receptacle and developing petal. Not detected in placental tissues, septum, stigma and ovules.

Its subcellular location is the nucleus. Functionally, transcription factor required for the initiation of nectary development. Also involved in suppressing early radial growth of the gynoecium, in promoting its later elongation and in fusion of its carpels by regulating both cell division and expansion. Establishes the polar differentiation in the carpels by specifying abaxial cell fate in the ovary wall. Regulates both cell division and expansion. In Arabidopsis thaliana (Mouse-ear cress), this protein is Protein CRABS CLAW.